We begin with the raw amino-acid sequence, 881 residues long: Sodium/potassium/calcium exchanger Nckx30C (881 aa).

Residues 1-194 (MLQPTTCSKQ…SRCRSRRCLR (194 aa)) are Extracellular-facing. Residue asparagine 69 is glycosylated (N-linked (GlcNAc...) asparagine). 4 disordered regions span residues 79–111 (DMLS…APSD), 149–181 (AKTR…LLHP), 215–255 (AAKP…TSGE), and 272–315 (GLEE…TTKT). Residues 85–95 (RSRSSSTTIDF) are compositionally biased toward polar residues. Residues 149–175 (AKTRSRTAAQLPATSAASATSSRGASA) show a composition bias toward low complexity. Residues 195–215 (LPIYSILLLCLTTQGLGLGDA) form a helical membrane-spanning segment. The Cytoplasmic portion of the chain corresponds to 216 to 330 (AKPRPAKQHF…DLFTKEQLEN (115 aa)). Residues 228–240 (SNSNSPNQNQNHN) are compositionally biased toward low complexity. A compositionally biased stretch (polar residues) spans 296–315 (AGNQRGINDTHNDNSTTTKT). A helical membrane pass occupies residues 331–351 (GAVILHIIGVIYMFVALAIVC). The Extracellular segment spans residues 352-375 (DEFFVPSLDVIIEKLGITDDVAGA). The stretch at 372 to 412 (VAGATFMAAGGSAPELFTSVIGVFVSFDDVGIGTIVGSAVF) is one Alpha-1 repeat. A helical membrane pass occupies residues 376-396 (TFMAAGGSAPELFTSVIGVFV). Over 397-402 (SFDDVG) the chain is Cytoplasmic. Residues 403-423 (IGTIVGSAVFNILFVIGMCAL) form a helical membrane-spanning segment. Topologically, residues 424–433 (FSKTVLSLTW) are extracellular. Residues 434–454 (WPLFRDCSFYSISLLVLIYFF) form a helical membrane-spanning segment. The Cytoplasmic portion of the chain corresponds to 455 to 458 (RDNR). The chain crosses the membrane as a helical span at residues 459–479 (IFWWEALILFTIYIGYVAFMK). Topologically, residues 480–720 (WNVQVETCVK…PDTRTPRGKR (241 aa)) are extracellular. A disordered region spans residues 508 to 565 (PAGNAANSSETSMATQPGGSVTSRAASETRSGPPGSSNAGATGNSSGGGGTSGSTQTG). Positions 512–537 (AANSSETSMATQPGGSVTSRAASETR) are enriched in polar residues. N-linked (GlcNAc...) asparagine glycosylation is found at asparagine 514 and asparagine 551. Over residues 542–551 (GSSNAGATGN) the composition is skewed to low complexity. The chain crosses the membrane as a helical span at residues 721–741 (FFPVTFIGSIVWIAAFSYLMV). At 742–756 (WWANVAGDTARIPPE) the chain is on the cytoplasmic side. Residues 757-777 (VMGLTFLAAGTSIPDLITSVI) traverse the membrane as a helical segment. The Alpha-2 repeat unit spans residues 764 to 795 (AAGTSIPDLITSVIVARKGFGDMAVSSSVGSN). The Extracellular portion of the chain corresponds to 778–795 (VARKGFGDMAVSSSVGSN). Residues 796-816 (IFDVTVGLPIPWLLYGIIYGA) traverse the membrane as a helical segment. At 817–822 (PVEVNS) the chain is on the cytoplasmic side. A helical transmembrane segment spans residues 823 to 843 (VGMVCSITILFMMLVFVVMSI). Over 844–852 (ACFRWRMNK) the chain is Extracellular. Residues 853-873 (GLGFTMFLLYFAFVAVSLMFE) traverse the membrane as a helical segment. Residues 874–881 (YDVITCPF) lie on the Cytoplasmic side of the membrane.

This sequence belongs to the Ca(2+):cation antiporter (CaCA) (TC 2.A.19) family. SLC24A subfamily. In terms of tissue distribution, expressed in the adult nervous system. Expressed in the photoreceptor cells as well as in the lamina, medulla, and optic lobes of the brain.

It is found in the membrane. May function in the removal and maintenance of calcium homeostasis during signaling in the adult and in signaling events during embryogenesis and patterning of imaginal disks. Transports one Ca(2+) and 1 K(+) in exchange for 4 Na(+). This Drosophila melanogaster (Fruit fly) protein is Sodium/potassium/calcium exchanger Nckx30C (Nckx30C).